A 121-amino-acid chain; its full sequence is Protein SNORC (121 aa).

A signal peptide spans Met-1 to Thr-24. Topologically, residues Ala-25 to Ala-92 are extracellular. Positions Glu-26–Asp-84 are disordered. A helical transmembrane segment spans residues Ile-93–Val-113. Topologically, residues Ala-114–Ser-121 are cytoplasmic.

Interacts (via the extracellular domain) with FGF2. As to expression, expressed only in cartilage, including nasal, knee epiphyseal and rib tissues. In proliferation and hypertrophic chondrocytes, detected intracellulary and in the pericellular extracellular matrix. In primary spongiosa, detected only in the extracellular matrix.

It localises to the membrane. The protein resides in the cytoplasm. Its subcellular location is the secreted. It is found in the extracellular space. The protein localises to the extracellular matrix. In terms of biological role, plays a role in the regulation of chondrocyte maturation and postnatal endochondral ossification. May inhibit cell growth stimulation induced by FGF2. This Mus musculus (Mouse) protein is Protein SNORC.